The chain runs to 254 residues: PF03932 family protein CutC (254 aa).

It belongs to the CutC family.

It localises to the cytoplasm. In Yersinia pestis bv. Antiqua (strain Angola), this protein is PF03932 family protein CutC.